The primary structure comprises 241 residues: L-aspartate dehydrogenase (241 aa).

NAD(+)-binding residues include alanine 109 and asparagine 164. Residue histidine 193 is part of the active site.

Belongs to the L-aspartate dehydrogenase family.

It catalyses the reaction L-aspartate + NADP(+) + H2O = oxaloacetate + NH4(+) + NADPH + H(+). It carries out the reaction L-aspartate + NAD(+) + H2O = oxaloacetate + NH4(+) + NADH + H(+). It participates in cofactor biosynthesis; NAD(+) biosynthesis; iminoaspartate from L-aspartate (dehydrogenase route): step 1/1. Functionally, specifically catalyzes the NAD or NADP-dependent dehydrogenation of L-aspartate to iminoaspartate. The chain is L-aspartate dehydrogenase from Thermotoga sp. (strain RQ2).